The following is a 54-amino-acid chain: Ovomucoid (54 aa).

Residues 4-54 form the Kazal-like domain; sequence VDCSDHPKPVCSLEYMPLCGSDSKTYSNKCDFCNAVVESNGTLTLSHFGKC. Intrachain disulfides connect C6–C36, C14–C33, and C22–C54. The N-linked (GlcNAc...) asparagine glycan is linked to N43.

It is found in the secreted. This Rhea americana (Greater rhea) protein is Ovomucoid.